The chain runs to 294 residues: 4-hydroxy-tetrahydrodipicolinate synthase (294 aa).

Thr47 is a binding site for pyruvate. Catalysis depends on Tyr135, which acts as the Proton donor/acceptor. Lys163 (schiff-base intermediate with substrate) is an active-site residue. A pyruvate-binding site is contributed by Ile206.

This sequence belongs to the DapA family. As to quaternary structure, homodimer.

The protein resides in the cytoplasm. It catalyses the reaction L-aspartate 4-semialdehyde + pyruvate = (2S,4S)-4-hydroxy-2,3,4,5-tetrahydrodipicolinate + H2O + H(+). It functions in the pathway amino-acid biosynthesis; L-lysine biosynthesis via DAP pathway; (S)-tetrahydrodipicolinate from L-aspartate: step 3/4. Catalyzes the condensation of (S)-aspartate-beta-semialdehyde [(S)-ASA] and pyruvate to 4-hydroxy-tetrahydrodipicolinate (HTPA). The protein is 4-hydroxy-tetrahydrodipicolinate synthase of Staphylococcus carnosus (strain TM300).